The sequence spans 145 residues: Large ribosomal subunit protein uL13 (145 aa).

It belongs to the universal ribosomal protein uL13 family. In terms of assembly, part of the 50S ribosomal subunit.

Functionally, this protein is one of the early assembly proteins of the 50S ribosomal subunit, although it is not seen to bind rRNA by itself. It is important during the early stages of 50S assembly. This Bacillus cereus (strain ZK / E33L) protein is Large ribosomal subunit protein uL13.